The primary structure comprises 875 residues: MKSVLMVAEKPSLAASLAGILSNGRCTAKRGTGNGCSTHEWTGNFRNEGSVHFRMTSVCGHVMSLDFNKKYNCWDKVDPIQLFGCATEKKETNPKQNMRKFLAHEARGCDYLVLWLDCDKEGENICFEVMDAVKHVINNVYSDQVTYRAHFSAITEKDIKKAMETLGHPNENEAKSVDARQELDLRIGCAFTRFQTKFFQDRYGDLDSSLISYGPCQTPTLGFCVKRHDDIQTFKPESFWHLQLLAGQPEVTLEWARGRVFKKDIAIMLLNRVKEHKKATVESVASKEAYKSKPQALNTVELMRICSSGLGIGPFQAMQIAERLYTQGYISYPRTETNQYPTNFDLPAVLHVLKPSADFGEEARSILGDIQTPRKGKDAGDHPPITPMKLGNRSDFDRDTWRVYEFICRHFMGTVSRDLKYRVTTAKLSVGMETFSCTASVLIDAGFTKVMTWSAFGKDEPQPPFVQGTQVAINDVRLIESQTGPPDYLTESELITLMEEHGIGTDASIPVHINNICQRNYVHIENGRKLMPTTLGIVLVHGYQKIDPELVLPTMRTEVERMLTLIAQGSANFQDVLRHAIKIFKLKFMYFVKNIDSMDALFEVSFSPLAESGKAHSRCGKCRRYMKYIQTKPARLHCSHCDETYALPIGNVKVYREFKCPLDDFDLLAFSTGVKGRSYPFCPYCYNHPPFSDMPHLGGCNTCTNANCPHSLNTLGISSCVECPTGVLVLDCTLAPTWKLGCNRCDVIINCFKGATKITVEEAKCQECGAQQVNVVYKSDKSKFKDGSEEKSGCIFCSADFSHLVEKHRAVASRPVRSGGGFRGGKAGRGGGGMGGAAFGSGGAVTAGGGPNAGGGVRGSRVAKDKMGQLASYFV.

A Toprim domain is found at 3 to 153 (SVLMVAEKPS…QVTYRAHFSA (151 aa)). A Topo IA-type catalytic domain is found at 170-589 (NENEAKSVDA…AIKIFKLKFM (420 aa)). Y332 acts as the O-(5'-phospho-DNA)-tyrosine intermediate in catalysis. The segment at 371 to 391 (QTPRKGKDAGDHPPITPMKLG) is disordered.

This sequence belongs to the type IA topoisomerase family.

The enzyme catalyses ATP-independent breakage of single-stranded DNA, followed by passage and rejoining.. Its function is as follows. Releases the supercoiling and torsional tension of DNA introduced during the DNA replication and transcription by transiently cleaving and rejoining one strand of the DNA duplex. Introduces a single-strand break via transesterification at a target site in duplex DNA. The scissile phosphodiester is attacked by the catalytic tyrosine of the enzyme, resulting in the formation of a DNA-(5'-phosphotyrosyl)-enzyme intermediate and the expulsion of a 3'-OH DNA strand. The free DNA strand than undergoes passage around the unbroken strand thus removing DNA supercoils. Finally, in the religation step, the DNA 3'-OH attacks the covalent intermediate to expel the active-site tyrosine and restore the DNA phosphodiester backbone. Weakly relaxes negative supercoils and displays a distinct preference for binding single-stranded DNA. The polypeptide is DNA topoisomerase 3-beta (Top3beta) (Drosophila melanogaster (Fruit fly)).